The following is a 520-amino-acid chain: Rho GTPase-activating protein gacV (520 aa).

The helical transmembrane segment at 8–28 (NIKTYYIIGIITLIFIVSAVI) threads the bilayer. A coiled-coil region spans residues 28-192 (IKNQLSSSNQ…EEQEEEQFSM (165 aa)). Disordered regions lie at residues 33–73 (SSSN…KLDN), 121–189 (EEKQ…EEEQ), 348–373 (NNNNNNNNNNNNNNNNNNDNNNNNNE), and 489–520 (LQEQNDQEEDNQEEEKDNQEEDEDEEDKDQEE). Basic residues predominate over residues 52–62 (SKGRGNKKGKK). Positions 63 to 73 (PEKIQEKKLDN) are enriched in basic and acidic residues. Residues 140–189 (QEEEEEEEEQQEIEEDEEEEEGQEQEEEEEQQEIEEGEEEQQEEEQEEEQ) show a composition bias toward acidic residues. The 278-residue stretch at 195–472 (VSIERLMDFQ…ILLKQKKEIA (278 aa)) folds into the Rho-GAP domain. Residues 348-372 (NNNNNNNNNNNNNNNNNNDNNNNNN) show a composition bias toward low complexity. The stretch at 480–520 (YFKDEYSKKLQEQNDQEEDNQEEEKDNQEEDEDEEDKDQEE) forms a coiled coil. Residues 493–520 (NDQEEDNQEEEKDNQEEDEDEEDKDQEE) are compositionally biased toward acidic residues.

It is found in the membrane. Its function is as follows. Rho GTPase-activating protein involved in the signal transduction pathway. This is Rho GTPase-activating protein gacV (gacV) from Dictyostelium discoideum (Social amoeba).